The sequence spans 131 residues: UPF0102 protein YraN (131 aa).

Belongs to the UPF0102 family.

In Salmonella typhimurium (strain LT2 / SGSC1412 / ATCC 700720), this protein is UPF0102 protein YraN.